A 505-amino-acid polypeptide reads, in one-letter code: Kinesin light chain 3 (505 aa).

Residues 1–20 (MSVQVAAPGGLGLGLERPSP) form a disordered region. A coiled-coil region spans residues 88–150 (LLALSAHVGA…EEEKSHLEFL (63 aa)). Residues 157–193 (DPPAESQQPESPPRRDSLASLFPSEEEERRGPEAVGA) form a disordered region. At Ser173 the chain carries Phosphoserine. TPR repeat units lie at residues 207–240 (LRTL…LERS), 249–282 (ATML…REQT), 291–324 (AATL…REKV), 333–366 (AKQL…YEAL), and 375–408 (AKTK…EALP). Residues 409 to 505 (APLGAPNTGT…STSTQDLGPR (97 aa)) form a disordered region. The span at 416 to 434 (TGTTSDTQQQTLSRSSSFS) shows a compositional bias: low complexity. A compositionally biased stretch (basic and acidic residues) spans 435–453 (KLRESIRRGSEKLVSRLRG). Ser467 is modified (phosphoserine). Residues 489–505 (SEASRTLSTSTQDLGPR) show a composition bias toward polar residues. Thr499 carries the phosphothreonine modification.

It belongs to the kinesin light chain family. In terms of assembly, oligomer composed of two heavy chains and two light chains. Associates with microtubulin in an ATP-dependent manner. Interacts with KIF5C. Interacts with ODF1. Interacts with LRGUK. Interacts with VDAC2.

The protein localises to the cytoplasm. It localises to the cytoskeleton. Its subcellular location is the mitochondrion. Functionally, kinesin is a microtubule-associated force-producing protein that may play a role in organelle transport. Plays a role during spermiogenesis in the development of the sperm tail midpiece and in the normal function of spermatozoa. May play a role in the formation of the mitochondrial sheath formation in the developing spermatid midpiece. This Bos taurus (Bovine) protein is Kinesin light chain 3 (KLC3).